The chain runs to 183 residues: uncharacterized protein (183 aa).

A helical transmembrane segment spans residues Leu153–Leu175.

It localises to the membrane. This is an uncharacterized protein from Saccharomyces cerevisiae (strain ATCC 204508 / S288c) (Baker's yeast).